The following is a 129-amino-acid chain: MKYFVVALALVAAFACIAESKPAESEHELAEVEEENELADLEDAVWLEHLADLSDLEEARGFFGNTWKKIKGKADKIMLKKAVKIMVKKEGISKEEAQAKVDAMSKKQIRLYVLKYYGKKALQKASEKL.

Positions 1-20 (MKYFVVALALVAAFACIAES) are cleaved as a signal peptide. A propeptide spanning residues 21–60 (KPAESEHELAEVEEENELADLEDAVWLEHLADLSDLEEAR) is cleaved from the precursor. The Processing quadruplet motif signature appears at 57–60 (EEAR).

Post-translationally, cleavage of the propeptide depends on the processing quadruplet motif (XXXR, with at least one of X being E). Expressed by the venom gland.

The protein resides in the secreted. Functionally, insecticidal, cytolytic and antimicrobial peptide. Forms voltage-dependent, ion-permeable channels in membranes. At high concentration causes cell membrane lysis. The chain is M-zodatoxin-Lt8c (cit 1-3) from Lachesana tarabaevi (Spider).